Here is a 364-residue protein sequence, read N- to C-terminus: uncharacterized protein (364 aa).

Over residues 1-17 (MEPGELMEVDTSQELDE) the composition is skewed to acidic residues. Positions 1–61 (MEPGELMEVD…EEDQSSTETM (61 aa)) are disordered. The segment covering 19–31 (TSAKETDQPKDAQ) has biased composition (basic and acidic residues).

This is an uncharacterized protein from Caenorhabditis elegans.